Reading from the N-terminus, the 718-residue chain is Heme peroxidase 2 (718 aa).

The N-terminal stretch at 1–19 is a signal peptide; that stretch reads MNLKPTILLFTILFLKCAT. A propeptide spanning residues 20–146 is cleaved from the precursor; sequence FEVNEETERI…QANRRCSSPP (127 aa). Disordered stretches follow at residues 41 to 64 and 108 to 144; these read RASE…ANSD and LLQS…RCSS. Residues 45 to 64 are compositionally biased toward polar residues; it reads NSESEQTSQHIIVSQQANSD. The segment covering 109 to 118 has biased composition (low complexity); the sequence is LQSSETTTTT. The segment covering 126–139 has biased composition (basic residues); it reads SKRSAIFRSKRQAN. The cysteines at positions 149 and 164 are disulfide-linked. The active-site Proton acceptor is the H241. Ca(2+) is bound at residue D242. The cysteines at positions 262 and 272 are disulfide-linked. Residues S311, F313, D315, and S317 each contribute to the Ca(2+) site. N-linked (GlcNAc...) asparagine glycosylation is present at N354. C358 and C366 are oxidised to a cystine. H477 is a binding site for heme b. 4 N-linked (GlcNAc...) asparagine glycosylation sites follow: N551, N592, N662, and N673. C682 and C705 form a disulfide bridge.

The protein belongs to the peroxidase family. It depends on heme b as a cofactor. In terms of tissue distribution, expressed in the hypodermis and gland cells of the pharynx. Specifically, there is low and transient expression from the distal bulb of the pharynx to the anterior of the buccal cavity. Whole body expression levels increase upon entry into the dauer phase.

The protein resides in the secreted. It catalyses the reaction 2 a phenolic donor + H2O2 = 2 a phenolic radical donor + 2 H2O. Its function is as follows. Peroxidase which is involved in maintaining the cuticle integrity in the hypodermis and pharynx. It thus plays a role in conferring resistance against Gram-positive bacteria such as E.faecalis, S.aureus and C.diphtheriae, and yeast such as C.albicans. This is Heme peroxidase 2 from Caenorhabditis elegans.